Reading from the N-terminus, the 1230-residue chain is Cullin-associated NEDD8-dissociated protein 1 (1230 aa).

Position 2 is an N-acetylalanine (Ala2). 12 HEAT repeats span residues 2 to 39 (ASAS…KDSI), 44 to 81 (DSER…KVKE), 83 to 119 (QVET…ELPP), 131 to 165 (CKKI…LSRQ), 171 to 208 (NFHP…SCGN), 210 to 247 (VFVD…QAGH), 248 to 282 (RIGE…FESF), 289 to 366 (EVYP…TRHE), 370 to 407 (EFYK…QTRP), 424 to 467 (PLTM…VLPG), 471 to 510 (QHIP…NHSP), and 515 to 552 (PHVQ…VIRP). Residue Lys55 is modified to N6-acetyllysine. The segment at 315 to 344 (DEDEDENAMDADGGDDDDQGSDDEYSDDDD) is disordered. Ser335 carries the phosphoserine modification. At Ser558 the chain carries Phosphoserine. HEAT repeat units lie at residues 563 to 602 (PYIK…NLGD), 606 to 643 (SDLP…LKID), 646 to 683 (PVLG…NYSD), 688 to 725 (AMID…VYPS), 729 to 768 (KISG…TGTN), 770 to 808 (LGYM…ALTR), 809 to 845 (ACPK…LGEV), 852 to 889 (SGQL…GNLP), 890 to 927 (EYLP…GLKP), 928 to 960 (YVEN…KLTL), 961 to 998 (IDPE…DHPQ), 1002 to 1039 (PLLK…NKPS), 1043 to 1097 (DLLD…DSCL), 1099 to 1133 (RLDI…LSTL), and 1140 to 1189 (QRLD…IPEA). The residue at position 971 (Lys971) is an N6-acetyllysine.

This sequence belongs to the CAND family. In terms of assembly, interacts with TBP. Part of a complex that contains CUL1 and RBX1. Interacts with unneddylated cullins: interacts with CUL1, CUL2, CUL3, CUL4A, CUL4B and CUL5. Does not bind neddylated CUL1. Interaction with cullins is abolished in presence of COMMD1, which antagonizes with CAND1 for interacting with cullins. Interacts with ERCC6. Interacts with DCUN1D1, DCUN1D2, DCUN1D3, DCUN1D4 and DCUN1D5; these interactions are bridged by cullins and strongly inhibits the neddylation of cullins.

It is found in the cytoplasm. Its subcellular location is the nucleus. Key assembly factor of SCF (SKP1-CUL1-F-box protein) E3 ubiquitin ligase complexes that promotes the exchange of the substrate-recognition F-box subunit in SCF complexes, thereby playing a key role in the cellular repertoire of SCF complexes. Acts as a F-box protein exchange factor. The exchange activity of CAND1 is coupled with cycles of neddylation conjugation: in the deneddylated state, cullin-binding CAND1 binds CUL1-RBX1, increasing dissociation of the SCF complex and promoting exchange of the F-box protein. Probably plays a similar role in other cullin-RING E3 ubiquitin ligase complexes. This chain is Cullin-associated NEDD8-dissociated protein 1 (CAND1), found in Bos taurus (Bovine).